The sequence spans 1761 residues: Nonribosomal peptide synthetase 6 (1761 aa).

Residues 63 to 468 (ERAALHPEKI…GRQDQQVKLR (406 aa)) are adenylation. Residues 600 to 675 (EATTEMELKL…AMAEKAKPVS (76 aa)) enclose the Carrier 1 domain. Ser636 carries the post-translational modification O-(pantetheine 4'-phosphoryl)serine. Positions 712 to 1135 (VEDVYPCTPL…AVLDPAEARD (424 aa)) are condensation 1. Carrier domains lie at 1169–1242 (SPNE…SNER) and 1237–1313 (SASN…EEEM). Ser1203 and Ser1274 each carry O-(pantetheine 4'-phosphoryl)serine. Residues 1354–1677 (IYPTRPLQQL…DKVQWFDTVV (324 aa)) are condensation 2.

Belongs to the NRP synthetase family.

It participates in siderophore biosynthesis. Functionally, NRPS involved in extracellular coprogen-type siderophores biosynthesis including coprogen, neocoprogen I and neocoprogen II. The role of extracellular siderophores in fungal virulence to plants is to supply iron to the fungus during plant infection, but not to act as phytotoxins, depriving their hosts of iron. This chain is Nonribosomal peptide synthetase 6, found in Cochliobolus miyabeanus (Brown spot disease fungus).